Consider the following 21-residue polypeptide: DINGGGATLPQKLYQTSGVLT.

It belongs to the cutinase family.

The protein localises to the secreted. It carries out the reaction cutin + H2O = cutin monomers.. Inhibited by diisopropyl fluorophosphate (DFP). Catalyzes the hydrolysis of complex carboxylic polyesters found in the cell wall of plants. Degrades cutin, a macromolecule that forms the structure of the plant cuticle. Allows pathogenic fungi to penetrate through the cuticular barrier into the host plant during the initial stage of fungal infection. The protein is Cutinase 2 of Colletotrichum gloeosporioides (Anthracnose fungus).